Reading from the N-terminus, the 401-residue chain is O-antigen ligase (401 aa).

Residues 1 to 20 (MFAATRLSRLRHDTSRILSH) are Cytoplasmic-facing. A helical transmembrane segment spans residues 21 to 37 (WILPLGWLALLTGMFWV). The Periplasmic segment spans residues 38–42 (GDRSD). A helical transmembrane segment spans residues 43–61 (YHRLFYILLAAPTLLYVIL). At 62 to 72 (QPRLLRPLTGS) the chain is on the cytoplasmic side. A helical membrane pass occupies residues 73–92 (PLFIAFLAFSSYMMLSLSWS). At 93–103 (TPENSTGSLLK) the chain is on the periplasmic side. The chain crosses the membrane as a helical span at residues 104–122 (RPLYIALLFFCAAILALEA). The Cytoplasmic segment spans residues 123-129 (PLRLKTA). The chain crosses the membrane as a helical span at residues 130 to 150 (TWLAALGAVISAAATLLRYYW). At 151–161 (DANPLRLTGYG) the chain is on the periplasmic side. The helical transmembrane segment at 162–183 (ALYNPLLSAHVYGAFTALWLAY) threads the bilayer. At 184–189 (WMQSRP) the chain is on the cytoplasmic side. Residues 190–208 (ILAPLPLISLALLGGLLIA) form a helical membrane-spanning segment. Topologically, residues 209–212 (TGSR) are periplasmic. The helical transmembrane segment at 213–229 (TPLVGLTAALMWLVLAG) threads the bilayer. Topologically, residues 230–234 (DRKKA) are cytoplasmic. The chain crosses the membrane as a helical span at residues 235–252 (LIALALALAGALLGYILY). The Periplasmic segment spans residues 253 to 306 (PEVITQRGASFRPEIWADALRQISEHPWLGHGYDHPMRIVLSNGMLLADPHNIE). Positions 258-319 (QRGASFRPEI…LFAGGIIGLL (62 aa)) are WZY-C. The helical transmembrane segment at 307 to 331 (LGVLFAGGIIGLLLWVAIYALAFGF) threads the bilayer. Over 332-339 (SWKNRKSP) the chain is Cytoplasmic. A helical membrane pass occupies residues 340–357 (AVLLASTWLVFGLAAGLT). Residues 358 to 368 (EGNAFLPRPKE) are Periplasmic-facing. The helical transmembrane segment at 369–385 (HWFLIWIPMALLYALWI) threads the bilayer. Over 386–401 (QQRFAASRRGEDIAAP) the chain is Cytoplasmic.

The protein belongs to the O-antigen ligase family. As to quaternary structure, homodimer.

The protein resides in the cell inner membrane. The enzyme catalyses a lipid-linked O antigen + a lipid A-core oligosaccharide = a lipopolysaccharide + a polyisoprenyl diphosphate.. It functions in the pathway bacterial outer membrane biogenesis; lipopolysaccharide biosynthesis. With respect to regulation, activity does not require ATP and magnesium ions. Its function is as follows. Transferase involved in the biosynthesis of the lipopolysaccharide (LPS). Catalyzes the transfer of a polymerized O-antigen molecule from its polyprenyl diphosphate membrane anchor to a terminal sugar of the lipid A-core oligosaccharide, finalizing the biosynthesis of the lipopolysaccharide. Required for the attachment of both A-band and B-band O-antigens, two forms of O-antigen produced by P.aeruginosa, onto the lipid A-core receptors. Important for cell wall integrity and motility of the bacteria. This chain is O-antigen ligase, found in Pseudomonas aeruginosa (strain ATCC 15692 / DSM 22644 / CIP 104116 / JCM 14847 / LMG 12228 / 1C / PRS 101 / PAO1).